The sequence spans 707 residues: Elongation factor G (707 aa).

The 290-residue stretch at 8–297 (ERVRNIGIAA…AVLDYLPSPL (290 aa)) folds into the tr-type G domain. GTP is bound by residues 17-24 (AHIDAGKT), 96-100 (DTPGH), and 150-153 (NKMD).

Belongs to the TRAFAC class translation factor GTPase superfamily. Classic translation factor GTPase family. EF-G/EF-2 subfamily.

Its subcellular location is the cytoplasm. Its function is as follows. Catalyzes the GTP-dependent ribosomal translocation step during translation elongation. During this step, the ribosome changes from the pre-translocational (PRE) to the post-translocational (POST) state as the newly formed A-site-bound peptidyl-tRNA and P-site-bound deacylated tRNA move to the P and E sites, respectively. Catalyzes the coordinated movement of the two tRNA molecules, the mRNA and conformational changes in the ribosome. The chain is Elongation factor G from Gloeobacter violaceus (strain ATCC 29082 / PCC 7421).